The sequence spans 413 residues: cAMP-dependent protein kinase regulatory subunit (413 aa).

A disordered region spans residues 1–145 (MADSSSFPGT…DSWTPPCHPK (145 aa)). The segment at 24–161 (SPIQKISEEE…RLKTAVSNNF (138 aa)) is dimerization and phosphorylation. Over residues 58 to 67 (GNSFNGDNGS) the composition is skewed to low complexity. Polar residues predominate over residues 121 to 138 (TSVSAESLNPTSAGSDSW). Phosphoserine is present on Ser122. Residues 162–291 (LFSH…FLEE), Glu240, Arg249, 294–413 (LLSS…PSPS), Glu361, and Arg370 contribute to the 3',5'-cyclic AMP site.

Belongs to the cAMP-dependent kinase regulatory chain family. As to quaternary structure, tetramer, composed of 2 regulatory (R) and 2 catalytic (C) subunits. In the presence of cAMP it dissociates into 2 active monomeric C subunits and an R dimer.

The protein is cAMP-dependent protein kinase regulatory subunit (pkaR) of Aspergillus fumigatus (strain ATCC MYA-4609 / CBS 101355 / FGSC A1100 / Af293) (Neosartorya fumigata).